We begin with the raw amino-acid sequence, 101 residues long: uncharacterized protein (101 aa).

The protein localises to the cytoplasm. This is an uncharacterized protein from Saccharomyces cerevisiae (strain ATCC 204508 / S288c) (Baker's yeast).